Here is a 617-residue protein sequence, read N- to C-terminus: Putative type VI secretion system protein VgrGB (617 aa).

The interval 449–469 (RTFHATNPSPYPLPASKTRTS) is disordered.

The protein belongs to the VgrG protein family.

In terms of biological role, a Vgr protein that is probably part of a type VI secretion system (T6SS). May be required for export of proteins involved in Rhs-mediated cellular contact-dependent growth inhibition (CDI). This chain is Putative type VI secretion system protein VgrGB (vgrGB), found in Dickeya dadantii (strain 3937) (Erwinia chrysanthemi (strain 3937)).